Reading from the N-terminus, the 446-residue chain is Histone acetyltransferase type B subunit 2 (446 aa).

WD repeat units lie at residues 138–178 (DHPG…ITPS), 189–229 (GHKE…GTSK), 231–270 (LKYSRKYTHHSHIVNDVQHHPLVKSWIGTVSDDLTLQIID), 286–326 (GHSD…SKVH), and 330–370 (GHQD…DEQT). An interaction with the histone H4 N-terminus region spans residues 372 to 376 (DDAED). One copy of the WD 6 repeat lies at 387–427 (GHTNHLADFSWNRNDPWLVCSAAEDNLLQIWKVANSIVSKE). The interval 427–446 (EPADMSTPELDDPKPKQSSH) is disordered. The segment covering 437 to 446 (DDPKPKQSSH) has biased composition (basic and acidic residues).

Belongs to the WD repeat RBAP46/RBAP48/MSI1 family. Component of the HAT-B complex composed of at least hat-1 and hat-2. The HAT-B complex binds to histone H4 tail.

Its subcellular location is the cytoplasm. The protein localises to the nucleus. In terms of biological role, regulatory subunit of the histone acetylase B (HAT-B) complex. The complex acetylates 'Lys-12' of histone H4 which is required for telomeric silencing. The chain is Histone acetyltransferase type B subunit 2 (hat-2) from Neurospora crassa (strain ATCC 24698 / 74-OR23-1A / CBS 708.71 / DSM 1257 / FGSC 987).